The chain runs to 154 residues: UPF0756 membrane protein BLi03063/BL00400 (154 aa).

The next 4 membrane-spanning stretches (helical) occupy residues 8-28 (FLIL…IIAV), 54-74 (WGVT…EIGF), 87-107 (WIAL…ITLL), and 117-137 (LVFG…GPLI).

This sequence belongs to the UPF0756 family.

It localises to the cell membrane. In Bacillus licheniformis (strain ATCC 14580 / DSM 13 / JCM 2505 / CCUG 7422 / NBRC 12200 / NCIMB 9375 / NCTC 10341 / NRRL NRS-1264 / Gibson 46), this protein is UPF0756 membrane protein BLi03063/BL00400.